Here is a 216-residue protein sequence, read N- to C-terminus: MAIGIVGRKRGMTRVFTEEGGSIPVTVVEADPNRVTQVKTEESDGYRAVQVTAGRRKPQRVRKPEAGHFARAGVEAGRGVWEFRLDKGQRASDEEMPETGGSIDVGGFEAGQKVDVTGTTKGRGFAGTVRRHNFRAQRNTHGNSKSHRVPGSIGQCQSPGRVFKGKKMAGQMGNRRATIQNLEVVRVDSERNLLLIRGAVPGAVGSDLIVRPASKA.

Disordered regions lie at residues 89–108 (QRASDEEMPETGGSIDVGGF) and 139–158 (NTHGNSKSHRVPGSIGQCQS). An N5-methylglutamine modification is found at glutamine 157.

Belongs to the universal ribosomal protein uL3 family. As to quaternary structure, part of the 50S ribosomal subunit. Forms a cluster with proteins L14 and L19. Methylated by PrmB.

Functionally, one of the primary rRNA binding proteins, it binds directly near the 3'-end of the 23S rRNA, where it nucleates assembly of the 50S subunit. In Halorhodospira halophila (strain DSM 244 / SL1) (Ectothiorhodospira halophila (strain DSM 244 / SL1)), this protein is Large ribosomal subunit protein uL3.